The chain runs to 548 residues: Chaperonin GroEL 2 (548 aa).

ATP contacts are provided by residues 30–33, K51, 87–91, G415, and D496; these read TLGP and DGTTT. Positions 529-548 are disordered; the sequence is KDAMPSPDMGGMGGMGGMGF. The segment covering 538 to 548 has biased composition (gly residues); sequence GGMGGMGGMGF.

This sequence belongs to the chaperonin (HSP60) family. Forms a cylinder of 14 subunits composed of two heptameric rings stacked back-to-back. Interacts with the co-chaperonin GroES.

The protein resides in the cytoplasm. It catalyses the reaction ATP + H2O + a folded polypeptide = ADP + phosphate + an unfolded polypeptide.. Functionally, together with its co-chaperonin GroES, plays an essential role in assisting protein folding. The GroEL-GroES system forms a nano-cage that allows encapsulation of the non-native substrate proteins and provides a physical environment optimized to promote and accelerate protein folding. In Rhodospirillum rubrum (strain ATCC 11170 / ATH 1.1.1 / DSM 467 / LMG 4362 / NCIMB 8255 / S1), this protein is Chaperonin GroEL 2.